Here is a 299-residue protein sequence, read N- to C-terminus: NAD kinase (299 aa).

Residue D64 is the Proton acceptor of the active site. NAD(+)-binding positions include 64–65 (DG), 138–139 (ND), R149, R166, D168, 179–184 (TGYAVS), and Q238.

This sequence belongs to the NAD kinase family. A divalent metal cation serves as cofactor.

It localises to the cytoplasm. The enzyme catalyses NAD(+) + ATP = ADP + NADP(+) + H(+). Its function is as follows. Involved in the regulation of the intracellular balance of NAD and NADP, and is a key enzyme in the biosynthesis of NADP. Catalyzes specifically the phosphorylation on 2'-hydroxyl of the adenosine moiety of NAD to yield NADP. In Nitratidesulfovibrio vulgaris (strain ATCC 29579 / DSM 644 / CCUG 34227 / NCIMB 8303 / VKM B-1760 / Hildenborough) (Desulfovibrio vulgaris), this protein is NAD kinase.